Consider the following 364-residue polypeptide: Anhydro-N-acetylmuramic acid kinase (364 aa).

11-18 serves as a coordination point for ATP; the sequence is GSSLDGID.

The protein belongs to the anhydro-N-acetylmuramic acid kinase family.

It carries out the reaction 1,6-anhydro-N-acetyl-beta-muramate + ATP + H2O = N-acetyl-D-muramate 6-phosphate + ADP + H(+). The protein operates within amino-sugar metabolism; 1,6-anhydro-N-acetylmuramate degradation. Its pathway is cell wall biogenesis; peptidoglycan recycling. Catalyzes the specific phosphorylation of 1,6-anhydro-N-acetylmuramic acid (anhMurNAc) with the simultaneous cleavage of the 1,6-anhydro ring, generating MurNAc-6-P. Is required for the utilization of anhMurNAc either imported from the medium or derived from its own cell wall murein, and thus plays a role in cell wall recycling. This chain is Anhydro-N-acetylmuramic acid kinase, found in Pseudomonas syringae pv. tomato (strain ATCC BAA-871 / DC3000).